The chain runs to 1010 residues: Trifunctional purine biosynthetic protein adenosine-3 (1010 aa).

Ala2 carries the N-acetylalanine modification. Phosphoserine is present on Ser10. Residues 111–318 enclose the ATP-grasp domain; that stretch reads KEFMDRHGIP…LYEVIQSTLD (208 aa). Residues 190-193, Glu197, Arg220, and Asn229 contribute to the ATP site; that span reads EELL. 2 residues coordinate Mg(2+): Glu288 and Asn290. The residue at position 350 (Lys350) is an N6-acetyllysine. Residues 434-809 are AIRS domain; that stretch reads SLTYKESGVD…HFSFEKKKAR (376 aa). Ser440 bears the Phosphoserine mark. Thr682 is modified (phosphothreonine). Ser796 and Ser802 each carry phosphoserine. Positions 810–1010 are GART domain; that stretch reads VAVLISGTGS…NGKICWVKEE (201 aa). 818 to 820 lines the N(1)-(5-phospho-beta-D-ribosyl)glycinamide pocket; it reads GSN. Residues Arg871, 896–899, and Asn913 each bind (6R)-10-formyltetrahydrofolate; that span reads MRIL. Catalysis depends on His915, which acts as the Proton donor. (6R)-10-formyltetrahydrofolate is bound at residue 947–951; that stretch reads AEDVD. 977-980 contacts N(1)-(5-phospho-beta-D-ribosyl)glycinamide; the sequence is KLAE.

The protein in the N-terminal section; belongs to the GARS family. In the central section; belongs to the AIR synthase family. It in the C-terminal section; belongs to the GART family. As to quaternary structure, homodimer. Mg(2+) serves as cofactor. Mn(2+) is required as a cofactor.

It carries out the reaction 5-phospho-beta-D-ribosylamine + glycine + ATP = N(1)-(5-phospho-beta-D-ribosyl)glycinamide + ADP + phosphate + H(+). It catalyses the reaction N(1)-(5-phospho-beta-D-ribosyl)glycinamide + (6R)-10-formyltetrahydrofolate = N(2)-formyl-N(1)-(5-phospho-beta-D-ribosyl)glycinamide + (6S)-5,6,7,8-tetrahydrofolate + H(+). The enzyme catalyses 2-formamido-N(1)-(5-O-phospho-beta-D-ribosyl)acetamidine + ATP = 5-amino-1-(5-phospho-beta-D-ribosyl)imidazole + ADP + phosphate + H(+). Its pathway is purine metabolism; IMP biosynthesis via de novo pathway; 5-amino-1-(5-phospho-D-ribosyl)imidazole from N(2)-formyl-N(1)-(5-phospho-D-ribosyl)glycinamide: step 2/2. It participates in purine metabolism; IMP biosynthesis via de novo pathway; N(1)-(5-phospho-D-ribosyl)glycinamide from 5-phospho-alpha-D-ribose 1-diphosphate: step 2/2. The protein operates within purine metabolism; IMP biosynthesis via de novo pathway; N(2)-formyl-N(1)-(5-phospho-D-ribosyl)glycinamide from N(1)-(5-phospho-D-ribosyl)glycinamide (10-formyl THF route): step 1/1. Functionally, trifunctional enzyme that catalyzes three distinct reactions as part of the 'de novo' inosine monophosphate biosynthetic pathway. In Homo sapiens (Human), this protein is Trifunctional purine biosynthetic protein adenosine-3 (GART).